A 500-amino-acid chain; its full sequence is Beta-glucosidase 2 (500 aa).

The N-terminal stretch at Met1–Gly24 is a signal peptide. Residues Gln44 and His144 each coordinate a beta-D-glucoside. The active-site Proton donor is Glu190. A disulfide bridge links Cys209 with Cys218. The N-linked (GlcNAc...) asparagine glycan is linked to Asn222. A beta-D-glucoside-binding residues include Tyr334 and Glu403. Residue Glu403 is the Nucleophile of the active site. The N-linked (GlcNAc...) asparagine glycan is linked to Asn410. Trp445 is a binding site for a beta-D-glucoside.

Belongs to the glycosyl hydrolase 1 family.

It catalyses the reaction Hydrolysis of terminal, non-reducing beta-D-glucosyl residues with release of beta-D-glucose.. The protein is Beta-glucosidase 2 (BGLU2) of Oryza sativa subsp. japonica (Rice).